The chain runs to 201 residues: FMN-dependent NADH:quinone oxidoreductase (201 aa).

Residues serine 10, 16-18 (SQS), 96-99 (MYNF), and 140-143 (SRGG) contribute to the FMN site.

This sequence belongs to the azoreductase type 1 family. As to quaternary structure, homodimer. It depends on FMN as a cofactor.

It catalyses the reaction 2 a quinone + NADH + H(+) = 2 a 1,4-benzosemiquinone + NAD(+). The catalysed reaction is N,N-dimethyl-1,4-phenylenediamine + anthranilate + 2 NAD(+) = 2-(4-dimethylaminophenyl)diazenylbenzoate + 2 NADH + 2 H(+). Its function is as follows. Quinone reductase that provides resistance to thiol-specific stress caused by electrophilic quinones. Also exhibits azoreductase activity. Catalyzes the reductive cleavage of the azo bond in aromatic azo compounds to the corresponding amines. The protein is FMN-dependent NADH:quinone oxidoreductase of Escherichia coli O6:H1 (strain CFT073 / ATCC 700928 / UPEC).